We begin with the raw amino-acid sequence, 372 residues long: MKKALITGITGQDGSYLAEFLLEKGYQVHGIKRRSSSFNTSRIDHIYQDPHEVNPHFFLHYGDLTDTSNLIRLVKEIQPDEIYNLGAQSHVAVSFESPEYTADVDAMGTLRLLEAVRINGLEHKTRFYQASTSELYGLVQEIPQRETTPFYPRSPYAVAKMYAYWITVNYRESYGMYACNGILFNHESPRRGETFVTRKITRAIANIALGLEDCLYLGNMDSLRDWGHAKDYVRMQWMMLQQDQPEDFVIATGKQITVREFVRMSAKEAGIEIEFSGKGIDEIATISAISDEYATSAKVGDIIVRVDPRYFRPAEVETLLGDPSKAKEKLGWVPEITVEEMCAEMVAGDLQQAKQHALLKANGFDVSITLES.

NADP(+) is bound by residues Gly-8–Asp-13, Asp-63–Leu-64, Leu-85–Ser-89, and Tyr-100. Residue Thr-132 is part of the active site. Residues Glu-134 and Tyr-156 each act as nucleophile in the active site. Lys-160, His-186, and Arg-191 together coordinate NADP(+).

Belongs to the NAD(P)-dependent epimerase/dehydratase family. GDP-mannose 4,6-dehydratase subfamily. NADP(+) serves as cofactor.

It catalyses the reaction GDP-alpha-D-mannose = GDP-4-dehydro-alpha-D-rhamnose + H2O. It participates in bacterial outer membrane biogenesis; LPS O-antigen biosynthesis. The protein operates within nucleotide-sugar biosynthesis; GDP-L-fucose biosynthesis via de novo pathway; GDP-L-fucose from GDP-alpha-D-mannose: step 1/2. Functionally, catalyzes the conversion of GDP-D-mannose to GDP-4-dehydro-6-deoxy-D-mannose. The protein is GDP-mannose 4,6-dehydratase of Yersinia enterocolitica serotype O:8 / biotype 1B (strain NCTC 13174 / 8081).